Consider the following 392-residue polypeptide: Galactokinase (392 aa).

40–43 serves as a coordination point for substrate; sequence EHID. ATP-binding positions include serine 74 and 128-134; that span reads GSGLSSS. Residues serine 134 and glutamate 167 each coordinate Mg(2+). Aspartate 179 functions as the Proton acceptor in the catalytic mechanism. Tyrosine 229 is a binding site for substrate.

It belongs to the GHMP kinase family. GalK subfamily.

The protein localises to the cytoplasm. The catalysed reaction is alpha-D-galactose + ATP = alpha-D-galactose 1-phosphate + ADP + H(+). The protein operates within carbohydrate metabolism; galactose metabolism. Catalyzes the transfer of the gamma-phosphate of ATP to D-galactose to form alpha-D-galactose-1-phosphate (Gal-1-P). The polypeptide is Galactokinase (Clostridium tetani (strain Massachusetts / E88)).